The chain runs to 181 residues: Inner membrane-spanning protein YciB (181 aa).

Helical transmembrane passes span 10 to 30, 50 to 70, 72 to 92, 118 to 138, and 148 to 168; these read LVIF…GALI, MHLI…VFHD, AFIK…LGIS, ITWY…YVAF, and FKVF…VFYL.

This sequence belongs to the YciB family.

The protein resides in the cell inner membrane. Functionally, plays a role in cell envelope biogenesis, maintenance of cell envelope integrity and membrane homeostasis. The sequence is that of Inner membrane-spanning protein YciB from Shewanella putrefaciens (strain CN-32 / ATCC BAA-453).